Reading from the N-terminus, the 260-residue chain is Global transcriptional regulator CodY (260 aa).

A GAF domain region spans residues 1–159 (MPNLLEKTRK…SSTVVGIQLL (159 aa)). The segment at residues 207 to 226 (ASVIADRIGITRSVIVNALR) is a DNA-binding region (H-T-H motif).

It belongs to the CodY family.

The protein resides in the cytoplasm. In terms of biological role, DNA-binding global transcriptional regulator which is involved in the adaptive response to starvation and acts by directly or indirectly controlling the expression of numerous genes in response to nutrient availability. During rapid exponential growth, CodY is highly active and represses genes whose products allow adaptation to nutrient depletion. The chain is Global transcriptional regulator CodY from Streptococcus equi subsp. equi (strain 4047).